A 407-amino-acid chain; its full sequence is Phosphopentomutase (407 aa).

6 residues coordinate Mn(2+): Asp10, Asp306, His311, Asp347, His348, and His359.

It belongs to the phosphopentomutase family. Requires Mn(2+) as cofactor.

Its subcellular location is the cytoplasm. The catalysed reaction is 2-deoxy-alpha-D-ribose 1-phosphate = 2-deoxy-D-ribose 5-phosphate. It catalyses the reaction alpha-D-ribose 1-phosphate = D-ribose 5-phosphate. Its pathway is carbohydrate degradation; 2-deoxy-D-ribose 1-phosphate degradation; D-glyceraldehyde 3-phosphate and acetaldehyde from 2-deoxy-alpha-D-ribose 1-phosphate: step 1/2. Its function is as follows. Isomerase that catalyzes the conversion of deoxy-ribose 1-phosphate (dRib-1-P) and ribose 1-phosphate (Rib-1-P) to deoxy-ribose 5-phosphate (dRib-5-P) and ribose 5-phosphate (Rib-5-P), respectively. In Serratia proteamaculans (strain 568), this protein is Phosphopentomutase.